The following is a 180-amino-acid chain: dCTP deaminase, dUMP-forming (180 aa).

DCTP is bound by residues 100 to 105 (RSSLGR), aspartate 117, 125 to 127 (TLE), glutamine 146, tyrosine 160, and glutamine 167. The active-site Proton donor/acceptor is the glutamate 127.

This sequence belongs to the dCTP deaminase family. In terms of assembly, homotrimer.

It carries out the reaction dCTP + 2 H2O = dUMP + NH4(+) + diphosphate. The protein operates within pyrimidine metabolism; dUMP biosynthesis; dUMP from dCTP: step 1/1. Functionally, bifunctional enzyme that catalyzes both the deamination of dCTP to dUTP and the hydrolysis of dUTP to dUMP without releasing the toxic dUTP intermediate. This is dCTP deaminase, dUMP-forming from Persephonella marina (strain DSM 14350 / EX-H1).